A 493-amino-acid chain; its full sequence is Rho guanine nucleotide exchange factor 9 (493 aa).

An SH3 domain is found at 15-74 (DSIVSAEAVWDHVTMANRGVAFKAGDVIKVLDASNKDWWWGQIDDEEGWFPASFVRLWVN). Residues 107–117 (RDQMRANVINE) form an interaction with GPHN region. Residues 110–294 (MRANVINEIM…RNVTQQINER (185 aa)) enclose the DH domain. The 108-residue stretch at 325-432 (ELIYTGEMAW…WLRAFREERK (108 aa)) folds into the PH domain. The tract at residues 453–473 (AMTVRKASKQKGRVGEEENQS) is disordered.

In terms of assembly, interacts with GPHN. In terms of tissue distribution, detected in brain, throughout the gray matter. Detected at low levels in heart and skeletal muscle.

It localises to the cytoplasm. The protein resides in the postsynaptic density. Its function is as follows. Acts as a guanine nucleotide exchange factor (GEF) for CDC42. Promotes formation of GPHN clusters. The chain is Rho guanine nucleotide exchange factor 9 (Arhgef9) from Rattus norvegicus (Rat).